The sequence spans 547 residues: Cilia- and flagella- associated protein 210 (547 aa).

Coiled coils occupy residues 50–131 (ERIR…RKKA), 183–251 (VKLN…MKKN), and 342–405 (IARD…KADK). The segment at 214-237 (KQIEEHKEEEEARKKSEEKDAEEM) is disordered.

As to quaternary structure, microtubule inner protein component of sperm flagellar doublet microtubules.

It localises to the cytoplasm. Its subcellular location is the cytoskeleton. It is found in the cilium axoneme. The protein resides in the flagellum axoneme. In terms of biological role, microtubule inner protein (MIP) part of the dynein-decorated doublet microtubules (DMTs) in cilia axoneme, which is required for motile cilia beating. In Mus musculus (Mouse), this protein is Cilia- and flagella- associated protein 210 (Cfap210).